The primary structure comprises 371 residues: Queuine tRNA-ribosyltransferase (371 aa).

D90 (proton acceptor) is an active-site residue. Residues 90–94 (DSGGF), D144, Q189, and G215 each bind substrate. An RNA binding region spans residues 246 to 252 (GVGTPEN). Residue D265 is the Nucleophile of the active site. Residues 270–274 (TRNAR) form an RNA binding; important for wobble base 34 recognition region. Residues C303, C305, C308, and H334 each coordinate Zn(2+).

It belongs to the queuine tRNA-ribosyltransferase family. In terms of assembly, homodimer. Within each dimer, one monomer is responsible for RNA recognition and catalysis, while the other monomer binds to the replacement base PreQ1. The cofactor is Zn(2+).

It catalyses the reaction 7-aminomethyl-7-carbaguanine + guanosine(34) in tRNA = 7-aminomethyl-7-carbaguanosine(34) in tRNA + guanine. Its pathway is tRNA modification; tRNA-queuosine biosynthesis. Its function is as follows. Catalyzes the base-exchange of a guanine (G) residue with the queuine precursor 7-aminomethyl-7-deazaguanine (PreQ1) at position 34 (anticodon wobble position) in tRNAs with GU(N) anticodons (tRNA-Asp, -Asn, -His and -Tyr). Catalysis occurs through a double-displacement mechanism. The nucleophile active site attacks the C1' of nucleotide 34 to detach the guanine base from the RNA, forming a covalent enzyme-RNA intermediate. The proton acceptor active site deprotonates the incoming PreQ1, allowing a nucleophilic attack on the C1' of the ribose to form the product. After dissociation, two additional enzymatic reactions on the tRNA convert PreQ1 to queuine (Q), resulting in the hypermodified nucleoside queuosine (7-(((4,5-cis-dihydroxy-2-cyclopenten-1-yl)amino)methyl)-7-deazaguanosine). This chain is Queuine tRNA-ribosyltransferase, found in Helicobacter acinonychis (strain Sheeba).